The primary structure comprises 300 residues: MAGRNQNRTASLAGIQASGHVHTFGNCTDNDMLEEDAEVYELRSRGKEKVRRSTSRDRLDDIVILTKDIQEGDTLNAVALQYCCTVADIKRVNNLISDQDFFALRSIKIPVKRFSSLTETLHPLKGRQVLHPPPVPYFQEQDTVPANDSPSSSESAGSFLKEVDRDIEQIVKCTDTKKENLNEVVSALTAQQVRFEPDNKSVHRKDPYYGADWGMGWWTAVVIMLIVGIITPVFYLLYYEILAKVDVSHHSTVDSSHLHPGLTPPSHHREMGNAIGPTKGIPVGQQDDHRLYRQDPQARD.

Residues 1 to 216 (MAGRNQNRTA…PYYGADWGMG (216 aa)) lie on the Extracellular side of the membrane. N-linked (GlcNAc...) asparagine glycans are attached at residues Asn-7 and Asn-26. Ser-55 is modified (phosphoserine). A LysM domain is found at 65–109 (LTKDIQEGDTLNAVALQYCCTVADIKRVNNLISDQDFFALRSIKI). The segment at 136–157 (PYFQEQDTVPANDSPSSSESAG) is disordered. Positions 140–156 (EQDTVPANDSPSSSESA) are enriched in polar residues. Asn-199 is a glycosylation site (N-linked (GlcNAc...) asparagine). A helical transmembrane segment spans residues 217 to 237 (WWTAVVIMLIVGIITPVFYLL). Residues 238–300 (YYEILAKVDV…LYRQDPQARD (63 aa)) are Cytoplasmic-facing. The segment at 253–300 (VDSSHLHPGLTPPSHHREMGNAIGPTKGIPVGQQDDHRLYRQDPQARD) is disordered. A compositionally biased stretch (basic and acidic residues) spans 286–300 (QDDHRLYRQDPQARD).

Its subcellular location is the cell membrane. The protein localises to the golgi apparatus. Functionally, essential for Golgi structural integrity. The sequence is that of LysM and putative peptidoglycan-binding domain-containing protein 3 (Lysmd3) from Rattus norvegicus (Rat).